Reading from the N-terminus, the 195-residue chain is Inosine triphosphate pyrophosphatase (195 aa).

13–18 (TGNAKK) is an ITP binding site. E43 contributes to the Mg(2+) binding site. ITP is bound by residues K55, 71–72 (DT), K88, 148–151 (FGWD), K171, and 176–177 (HR).

Belongs to the HAM1 NTPase family. As to quaternary structure, homodimer. The cofactor is Mg(2+). Requires Mn(2+) as cofactor.

Its subcellular location is the cytoplasm. The catalysed reaction is ITP + H2O = IMP + diphosphate + H(+). It catalyses the reaction dITP + H2O = dIMP + diphosphate + H(+). It carries out the reaction XTP + H2O = XMP + diphosphate + H(+). The enzyme catalyses N(6)-hydroxy-dATP + H2O = N(6)-hydroxy-dAMP + diphosphate + H(+). Functionally, pyrophosphatase that hydrolyzes the non-canonical purine nucleotides inosine triphosphate (ITP), deoxyinosine triphosphate (dITP) as well as 2'-deoxy-N-6-hydroxylaminopurine triphosphate (dHAPTP) and xanthosine 5'-triphosphate (XTP) to their respective monophosphate derivatives. The enzyme does not distinguish between the deoxy- and ribose forms. Probably excludes non-canonical purines from RNA and DNA precursor pools, thus preventing their incorporation into RNA and DNA and avoiding chromosomal lesions. The chain is Inosine triphosphate pyrophosphatase (itpa) from Xenopus laevis (African clawed frog).